Consider the following 127-residue polypeptide: Glycine cleavage system H protein (127 aa).

In terms of domain architecture, Lipoyl-binding spans 22-104 (EVVIGITHFA…YEGAWMVKVE (83 aa)). Lys63 is subject to N6-lipoyllysine.

It belongs to the GcvH family. As to quaternary structure, the glycine cleavage system is composed of four proteins: P, T, L and H. Requires (R)-lipoate as cofactor.

Functionally, the glycine cleavage system catalyzes the degradation of glycine. The H protein shuttles the methylamine group of glycine from the P protein to the T protein. Its function is as follows. Is also involved in protein lipoylation via its role as an octanoyl/lipoyl carrier protein intermediate. The chain is Glycine cleavage system H protein from Bacillus cereus (strain ZK / E33L).